We begin with the raw amino-acid sequence, 695 residues long: Elongation factor G (695 aa).

The tr-type G domain occupies Lys10–Leu289. GTP is bound by residues Ala19–Thr26, Asp83–His87, and Asn137–Asp140.

It belongs to the TRAFAC class translation factor GTPase superfamily. Classic translation factor GTPase family. EF-G/EF-2 subfamily.

The protein localises to the cytoplasm. Functionally, catalyzes the GTP-dependent ribosomal translocation step during translation elongation. During this step, the ribosome changes from the pre-translocational (PRE) to the post-translocational (POST) state as the newly formed A-site-bound peptidyl-tRNA and P-site-bound deacylated tRNA move to the P and E sites, respectively. Catalyzes the coordinated movement of the two tRNA molecules, the mRNA and conformational changes in the ribosome. The protein is Elongation factor G of Protochlamydia amoebophila (strain UWE25).